The primary structure comprises 195 residues: Peptidyl-tRNA hydrolase (195 aa).

Tyrosine 17 lines the tRNA pocket. The active-site Proton acceptor is the histidine 22. Positions 68, 70, and 116 each coordinate tRNA.

It belongs to the PTH family. As to quaternary structure, monomer.

The protein resides in the cytoplasm. It carries out the reaction an N-acyl-L-alpha-aminoacyl-tRNA + H2O = an N-acyl-L-amino acid + a tRNA + H(+). Its function is as follows. Hydrolyzes ribosome-free peptidyl-tRNAs (with 1 or more amino acids incorporated), which drop off the ribosome during protein synthesis, or as a result of ribosome stalling. Catalyzes the release of premature peptidyl moieties from peptidyl-tRNA molecules trapped in stalled 50S ribosomal subunits, and thus maintains levels of free tRNAs and 50S ribosomes. In Shewanella baltica (strain OS155 / ATCC BAA-1091), this protein is Peptidyl-tRNA hydrolase.